The sequence spans 324 residues: Leucine carboxyl methyltransferase 1 (324 aa).

S-adenosyl-L-methionine contacts are provided by residues R74, G101, D128, 172-173, and E196; that span reads DL.

This sequence belongs to the methyltransferase superfamily. LCMT family.

The catalysed reaction is [phosphatase 2A protein]-C-terminal L-leucine + S-adenosyl-L-methionine = [phosphatase 2A protein]-C-terminal L-leucine methyl ester + S-adenosyl-L-homocysteine. In terms of biological role, methylates the carboxyl group of the C-terminal leucine residue of protein phosphatase 2A catalytic subunits to form alpha-leucine ester residues. This Yarrowia lipolytica (strain CLIB 122 / E 150) (Yeast) protein is Leucine carboxyl methyltransferase 1 (PPM1).